The chain runs to 106 residues: Pyrimidine/purine nucleoside phosphorylase (106 aa).

The protein belongs to the nucleoside phosphorylase PpnP family.

It carries out the reaction a purine D-ribonucleoside + phosphate = a purine nucleobase + alpha-D-ribose 1-phosphate. It catalyses the reaction adenosine + phosphate = alpha-D-ribose 1-phosphate + adenine. The enzyme catalyses cytidine + phosphate = cytosine + alpha-D-ribose 1-phosphate. The catalysed reaction is guanosine + phosphate = alpha-D-ribose 1-phosphate + guanine. It carries out the reaction inosine + phosphate = alpha-D-ribose 1-phosphate + hypoxanthine. It catalyses the reaction thymidine + phosphate = 2-deoxy-alpha-D-ribose 1-phosphate + thymine. The enzyme catalyses uridine + phosphate = alpha-D-ribose 1-phosphate + uracil. The catalysed reaction is xanthosine + phosphate = alpha-D-ribose 1-phosphate + xanthine. In terms of biological role, catalyzes the phosphorolysis of diverse nucleosides, yielding D-ribose 1-phosphate and the respective free bases. Can use uridine, adenosine, guanosine, cytidine, thymidine, inosine and xanthosine as substrates. Also catalyzes the reverse reactions. This chain is Pyrimidine/purine nucleoside phosphorylase, found in Leptospira interrogans serogroup Icterohaemorrhagiae serovar copenhageni (strain Fiocruz L1-130).